The sequence spans 298 residues: DNA-binding transcriptional activator HetR (298 aa).

Serine 152 is an active-site residue.

It belongs to the peptidase S48 family. As to quaternary structure, homodimer; disulfide-linked.

Functionally, controls heterocyst differentiation. Dimerization is required for DNA-binding. Has both a protease and a DNA-binding activity. This Nostoc sp. (strain PCC 9229) protein is DNA-binding transcriptional activator HetR.